The chain runs to 56 residues: Large ribosomal subunit protein bL33c (56 aa).

This sequence belongs to the bacterial ribosomal protein bL33 family.

The protein resides in the plastid. It localises to the chloroplast. The protein is Large ribosomal subunit protein bL33c (rpl33) of Guillardia theta (Cryptophyte).